Reading from the N-terminus, the 65-residue chain is Large ribosomal subunit protein bL35 (65 aa).

This sequence belongs to the bacterial ribosomal protein bL35 family.

The chain is Large ribosomal subunit protein bL35 from Oleidesulfovibrio alaskensis (strain ATCC BAA-1058 / DSM 17464 / G20) (Desulfovibrio alaskensis).